The primary structure comprises 141 residues: Large ribosomal subunit protein uL11 (141 aa).

This sequence belongs to the universal ribosomal protein uL11 family. Part of the ribosomal stalk of the 50S ribosomal subunit. Interacts with L10 and the large rRNA to form the base of the stalk. L10 forms an elongated spine to which L12 dimers bind in a sequential fashion forming a multimeric L10(L12)X complex. Post-translationally, one or more lysine residues are methylated.

Its function is as follows. Forms part of the ribosomal stalk which helps the ribosome interact with GTP-bound translation factors. The sequence is that of Large ribosomal subunit protein uL11 from Parasynechococcus marenigrum (strain WH8102).